The primary structure comprises 209 residues: Large ribosomal subunit protein uL3 (209 aa).

Positions 124-156 (KRHNFSGGQRTHGQSDRQRAPGSVGGSSDPSRV) are disordered.

Belongs to the universal ribosomal protein uL3 family. In terms of assembly, part of the 50S ribosomal subunit. Forms a cluster with proteins L14 and L19.

Functionally, one of the primary rRNA binding proteins, it binds directly near the 3'-end of the 23S rRNA, where it nucleates assembly of the 50S subunit. The polypeptide is Large ribosomal subunit protein uL3 (Pelodictyon phaeoclathratiforme (strain DSM 5477 / BU-1)).